A 163-amino-acid chain; its full sequence is Retinoic acid receptor responder protein 2 (163 aa).

An N-terminal signal peptide occupies residues 1 to 20; that stretch reads MRRLLIPLALWLGAVGVGVA. 3 disulfide bridges follow: C77/C87, C98/C117, and C101/C135. The propeptide occupies 158–163; the sequence is KALPRS.

In terms of processing, secreted in an inactive precursor form, prochemerin, which is proteolytically processed by a variety of extracellular proteases to generate forms with differing levels of bioactivity. For example, the removal of six amino acids results in chemerin-157, which exhibits the highest activity, while removal of seven amino acids results in chemerin-156 which has slightly less activity. Some proteases are able to cleave at more than one site and chemerin forms may be sequentially processed by different enzymes to modulate activity levels. The coordinated expression and activity of chemerin-modifying enzymes is essential for regulating its bioactivation, inactivation and, consequently, biological function. Cathepsin G cleaves seven C-terminal amino acids from prochemerin (chemerin-156), elastase is able to cleave six (chemerin-157), eight (chemerin-155) or eleven (chemerin-152), plasmin cleaves five amino acids (chemerin-158), and tryptase cleaves five (chemerin-158) or eight (chemerin-155). Multiple cleavages might be required to fully activate chemerin, with an initial tryptase cleavage resulting in chemerin with low activity (chemerin-158), and a second cleavage by carboxypeptidase N or B producing highly active chemerin (chemerin-157).

It localises to the secreted. In terms of biological role, adipocyte-secreted protein (adipokine) that regulates adipogenesis, metabolism and inflammation through activation of the chemokine-like receptor 1 (CMKLR1). Also acts as a ligand for CMKLR2. Can also bind to C-C chemokine receptor-like 2 (CCRL2), but with a lower affinity than it does to CMKLR1 or CMKLR2. Positively regulates adipocyte differentiation, modulates the expression of adipocyte genes involved in lipid and glucose metabolism and might play a role in angiogenesis, a process essential for the expansion of white adipose tissue. Also acts as a pro-inflammatory adipokine, causing an increase in secretion of pro-inflammatory and prodiabetic adipokines, which further impair adipose tissue metabolic function and have negative systemic effects including impaired insulin sensitivity, altered glucose and lipid metabolism, and a decrease in vascular function in other tissues. Can have both pro- and anti-inflammatory properties depending on the modality of enzymatic cleavage by different classes of proteases. Acts as a chemotactic factor for leukocyte populations expressing CMKLR1, particularly immature plasmacytoid dendritic cells, but also immature myeloid DCs, macrophages and natural killer cells. Exerts an anti-inflammatory role by preventing TNF/TNFA-induced VCAM1 expression and monocytes adhesion in vascular endothelial cells. The effect is mediated via inhibiting activation of NF-kappa-B and CRK/p38 through stimulation of AKT1/NOS3 signaling and nitric oxide production. Exhibits an antimicrobial function in the skin. The chain is Retinoic acid receptor responder protein 2 (RARRES2) from Pongo abelii (Sumatran orangutan).